We begin with the raw amino-acid sequence, 524 residues long: MTRRALVSVSDKTGLVPFARRLAALGVELLSTGGTQKTLAEAGVPVVGVGDYTQAPEILGGRVKTLHPRVHGGILYRRGLASDEADVKARDIPPIDLVVVNLYPFREAVAAGKPFETCVEEIDIGGPTMVRSAAKNSAHVGVVVDPADYEKVAAELEATRTLSAATRFYLMKKAFAHTAAYDAAISEYLTAREAPEAAPAHFPATLAAVYTKAYDLRYGENPHQAGAFYRAAREPEEPSVAFADVLQGKELSYNNLLDLQAALAGVMEFDETACVIIKHNTPCGVSTGRTAGEAFARARECDPVSAFGGIVALNRPVDEATASELTSLFLECVIAPGYDAAARAALAVKKNLRLLEAPRLGAARATWRRRPEEGRELRSIPGGLLVMDRDLGSVRRDDCKVMTKRAPTEQEWKDLLFAWKVVKHVKSNAIVFAKDDRTVAIGGGQTSRVESVKTAVMKAALDVRGSSVGSDAFFPFADGVEEIIKAGATAIIQPGGSMRDAEVIAAADKAGIAMVATGMRHFRH.

The region spanning Met1–Val144 is the MGS-like domain.

It belongs to the PurH family.

It carries out the reaction (6R)-10-formyltetrahydrofolate + 5-amino-1-(5-phospho-beta-D-ribosyl)imidazole-4-carboxamide = 5-formamido-1-(5-phospho-D-ribosyl)imidazole-4-carboxamide + (6S)-5,6,7,8-tetrahydrofolate. It catalyses the reaction IMP + H2O = 5-formamido-1-(5-phospho-D-ribosyl)imidazole-4-carboxamide. Its pathway is purine metabolism; IMP biosynthesis via de novo pathway; 5-formamido-1-(5-phospho-D-ribosyl)imidazole-4-carboxamide from 5-amino-1-(5-phospho-D-ribosyl)imidazole-4-carboxamide (10-formyl THF route): step 1/1. It functions in the pathway purine metabolism; IMP biosynthesis via de novo pathway; IMP from 5-formamido-1-(5-phospho-D-ribosyl)imidazole-4-carboxamide: step 1/1. The sequence is that of Bifunctional purine biosynthesis protein PurH from Anaeromyxobacter sp. (strain K).